The chain runs to 137 residues: Altered inheritance of mitochondria protein 11 (137 aa).

2 helical membrane passes run 20–37 (YGAAAFTLITMRLISRAI) and 66–88 (LTYASAASIGTFSTLIFGFCWAL).

The protein belongs to the AIM11 family.

It is found in the membrane. The polypeptide is Altered inheritance of mitochondria protein 11 (AIM11) (Saccharomyces cerevisiae (strain YJM789) (Baker's yeast)).